Consider the following 97-residue polypeptide: Co-chaperonin GroES (97 aa).

It belongs to the GroES chaperonin family. In terms of assembly, heptamer of 7 subunits arranged in a ring. Interacts with the chaperonin GroEL.

It localises to the cytoplasm. Its function is as follows. Together with the chaperonin GroEL, plays an essential role in assisting protein folding. The GroEL-GroES system forms a nano-cage that allows encapsulation of the non-native substrate proteins and provides a physical environment optimized to promote and accelerate protein folding. GroES binds to the apical surface of the GroEL ring, thereby capping the opening of the GroEL channel. In Pseudomonas putida (strain GB-1), this protein is Co-chaperonin GroES.